The sequence spans 333 residues: Glutamyl-tRNA reductase (333 aa).

Substrate is bound by residues 60–63 (TCHR), serine 110, 115–117 (ETE), and glutamine 121. Cysteine 61 serves as the catalytic Nucleophile. 189–194 (GYSEIN) provides a ligand contact to NADP(+).

This sequence belongs to the glutamyl-tRNA reductase family. In terms of assembly, homodimer.

It catalyses the reaction (S)-4-amino-5-oxopentanoate + tRNA(Glu) + NADP(+) = L-glutamyl-tRNA(Glu) + NADPH + H(+). The protein operates within porphyrin-containing compound metabolism; protoporphyrin-IX biosynthesis; 5-aminolevulinate from L-glutamyl-tRNA(Glu): step 1/2. Functionally, catalyzes the NADPH-dependent reduction of glutamyl-tRNA(Glu) to glutamate 1-semialdehyde (GSA). This chain is Glutamyl-tRNA reductase, found in Chlamydia muridarum (strain MoPn / Nigg).